Reading from the N-terminus, the 198-residue chain is MILFSIFVALLAATRAQSQTPPGFKPSTELHLGVTFQDGVSVQAGHELLANEAKSAPQLDLHSLLAIHHTQTPFYHSTWKFMVFMIDIDVERNGTKYPLLHWYQPDLILSGRTGRLSIESDSNMPKAMYAGPAPPPGPAHRYVEVIFKQPERYELPADFEKFLENTIAARLGFDIEQFVKEAGLSEPVAGNWFLTATS.

An N-terminal signal peptide occupies residues 1–18 (MILFSIFVALLAATRAQS). Asparagine 93 carries N-linked (GlcNAc...) asparagine glycosylation.

Belongs to the tstN family.

Functionally, phosphatidylethanolamine-binding protein; part of the gene cluster that mediates the biosynthesis of the antihypercholesterolemic agents phomoidrides which are dimeric anhydrides. Within the pathway, tstNB is not essential for dimerization and its function has still to be determined. The pathway begins with the highly reducing polyketide synthase tstA that catalyzes the formation of a C12-fatty acyl-ACP, starting from one acetate and 5 malonate units. The hydrolase tstM is involved in the release of the C12-fatty acyl chain from phiA. The alkylcitrate synthase (ACS) tstJ and the alkylcitrate dehydratase (ACDH) tstI then give rise to decarboxylated monomeric anhydrides by coupling the C12-fatty acyl chain with oxalacetic acid. The cyclase tstC is responsible for the dimerization of the monomeric anhydrides which leads to the production of prephomoidride that contains the characteristic bicyclo[4.3.1]deca-1,6-diene system of phomoidrides. Iterative oxidation catalyzed by the alpha-ketoglutarate-dependent dioxygenase tstK produced then phomoidride A. Finally, the methyltransferase tstE converts phomoidride A to phomoidride B via an acetalization reaction. The phosphatidylethanolamine-binding protein tstB and tstN are not essential for dimerization and their functions have still to be determined. This Talaromyces stipitatus (strain ATCC 10500 / CBS 375.48 / QM 6759 / NRRL 1006) (Penicillium stipitatum) protein is Phomoidride biosynthesis cluster protein N.